Reading from the N-terminus, the 173-residue chain is UPF0102 protein Psyc_1908 (173 aa).

Belongs to the UPF0102 family.

In Psychrobacter arcticus (strain DSM 17307 / VKM B-2377 / 273-4), this protein is UPF0102 protein Psyc_1908.